The primary structure comprises 808 residues: Probable inorganic carbon transporter subunit DabA (808 aa).

Residues Cys-335, Asp-337, His-497, and Cys-512 each coordinate Zn(2+).

The protein belongs to the inorganic carbon transporter (TC 9.A.2) DabA family. Forms a complex with DabB. Zn(2+) serves as cofactor.

Its subcellular location is the cell inner membrane. Functionally, part of an energy-coupled inorganic carbon pump. The sequence is that of Probable inorganic carbon transporter subunit DabA from Rhodopseudomonas palustris (strain TIE-1).